The primary structure comprises 353 residues: Guanine nucleotide-binding protein subunit alpha (353 aa).

Positions 1–25 (MGCGMSTEDKEGKARNEEIENQLKR) are disordered. Gly-2 carries the N-myristoyl glycine lipid modification. Cys-3 carries the S-palmitoyl cysteine lipid modification. Basic and acidic residues predominate over residues 7 to 25 (TEDKEGKARNEEIENQLKR). Residues 32 to 353 (NEIKMLLLGA…QENLRLCGLI (322 aa)) enclose the G-alpha domain. Positions 35-48 (KMLLLGAGESGKST) are G1 motif. GTP is bound by residues Glu-43, Ser-44, Gly-45, Lys-46, Ser-47, Thr-48, Asp-150, Leu-175, Thr-181, Gly-203, Asn-269, Lys-270, Asp-272, and Ala-325. A Mg(2+)-binding site is contributed by Ser-47. Residues 173 to 181 (DVLRSRVKT) form a G2 motif region. Mg(2+) is bound at residue Thr-181. The interval 196-205 (YRMFDVGGQR) is G3 motif. Positions 265 to 272 (ILFLNKID) are G4 motif. The segment at 323–328 (TCATDT) is G5 motif.

It belongs to the G-alpha family. G(q) subfamily. G proteins are composed of 3 units; alpha, beta and gamma. The alpha chain contains the guanine nucleotide binding site. The cofactor is Mg(2+).

Its function is as follows. Guanine nucleotide-binding proteins (G proteins) are involved as modulators or transducers in various transmembrane signaling systems. The protein is Guanine nucleotide-binding protein subunit alpha (CTG1) of Colletotrichum trifolii.